A 488-amino-acid polypeptide reads, in one-letter code: Mannitol 2-dehydrogenase (488 aa).

37 to 48 is an NAD(+) binding site; sequence IVHVGVGGFHRA.

This sequence belongs to the mannitol dehydrogenase family. Monomer.

It catalyses the reaction D-mannitol + NAD(+) = D-fructose + NADH + H(+). Catalyzes the NAD(H)-dependent interconversion of D-fructose and D-mannitol in the mannitol metabolic pathway. The protein is Mannitol 2-dehydrogenase of Aspergillus niger (strain ATCC MYA-4892 / CBS 513.88 / FGSC A1513).